An 81-amino-acid polypeptide reads, in one-letter code: Photosystem I iron-sulfur center (81 aa).

4Fe-4S ferredoxin-type domains are found at residues 2–31 and 39–68; these read SHAVKIYDTCIGCTQCVRACPLDVLEMVPW and IASSPRTEDCVGCKRCETACPTDFLSIRVY. [4Fe-4S] cluster contacts are provided by Cys-11, Cys-14, Cys-17, Cys-21, Cys-48, Cys-51, Cys-54, and Cys-58.

As to quaternary structure, the cyanobacterial PSI reaction center is composed of one copy each of PsaA,B,C,D,E,F,I,J,K,L,M and X, and forms trimeric complexes. The cofactor is [4Fe-4S] cluster.

It is found in the cellular thylakoid membrane. It catalyses the reaction reduced [plastocyanin] + hnu + oxidized [2Fe-2S]-[ferredoxin] = oxidized [plastocyanin] + reduced [2Fe-2S]-[ferredoxin]. In terms of biological role, apoprotein for the two 4Fe-4S centers FA and FB of photosystem I (PSI); essential for photochemical activity. FB is the terminal electron acceptor of PSI, donating electrons to ferredoxin. The C-terminus interacts with PsaA/B/D and helps assemble the protein into the PSI complex. Required for binding of PsaD and PsaE to PSI. PSI is a plastocyanin/cytochrome c6-ferredoxin oxidoreductase, converting photonic excitation into a charge separation, which transfers an electron from the donor P700 chlorophyll pair to the spectroscopically characterized acceptors A0, A1, FX, FA and FB in turn. This Prochlorococcus marinus (strain NATL2A) protein is Photosystem I iron-sulfur center.